Reading from the N-terminus, the 195-residue chain is Apoptosis-associated speck-like protein containing a CARD (195 aa).

In terms of domain architecture, Pyrin spans 1–91 (MGCTRDAILD…AEQLQETMSK (91 aa)). Glycyl lysine isopeptide (Lys-Gly) (interchain with G-Cter in ubiquitin) cross-links involve residues Lys55 and Lys174. In terms of domain architecture, CARD spans 107 to 195 (TAKPGLHFVD…PYLVDDLEQS (89 aa)). Ser195 is subject to Phosphoserine.

In terms of assembly, self-associates; enforced oligomerization induces apoptosis, NF-kappa-B regulation and interleukin-1 beta secretion. Homooligomers can form disk-like particles of approximately 12 nm diameter and approximately 1 nm height. Component of several inflammasomes containing one pattern recognition receptor/sensor, such as NLRP1, NLRP2, NLRP3, NLRP6, NLRC4, AIM2, MEFV or NOD2, and probably NLRC4 or NLRP12. Major component of the ASC pyroptosome, a 1-2 um supramolecular assembly (one per macrophage cell) which consists of oligomerized PYCARD dimers and CASP1. Interacts with CASP1 (precursor form); the interaction induces activation of CASP1 leading to the processing of interleukin-1 beta; PYCARD competes with RIPK2 for binding to CASP1. Interacts with NLRP3; the interaction requires the homooligomerization of NLRP3. Interacts with NLRP2, NLRC4, MEFV, CARD16, AIM2, NOD2, RIGI, RIPK2, PYDC1, PYDC2, NLRP10, CASP8, CHUK, IKBKB and BAX. Component of the AIM2 PANoptosome complex, a multiprotein complex that drives inflammatory cell death (PANoptosis). Phosphorylated. Post-translationally, 'Lys-63'-linked polyubiquitination by TRAF3 is critical for speck formation and inflammasome activation. 'Lys-63'-linked deubiquitinated by USP50; a crucial step for NLRP3-mediated inflammasome activation. 'Lys-63'-linked polyubiquitination by PELI1 is also critical for speck formation and inflammasome activation. Deubiquitinated by USP3 that cleaves 'Lys-48'-linked ubiquitin chains and strengthens its stability by blocking proteasomal degradation.

The protein localises to the cytoplasm. It is found in the inflammasome. Its subcellular location is the endoplasmic reticulum. It localises to the mitochondrion. The protein resides in the nucleus. Functionally, functions as a key mediator in apoptosis and inflammation. Promotes caspase-mediated apoptosis involving predominantly caspase-8 and also caspase-9 in a probable cell type-specific manner. Involved in activation of the mitochondrial apoptotic pathway, promotes caspase-8-dependent proteolytic maturation of BID independently of FADD in certain cell types and also mediates mitochondrial translocation of BAX and activates BAX-dependent apoptosis coupled to activation of caspase-9, -2 and -3. Involved in innate immune response by acting as an integral adapter in the assembly of various inflammasomes (NLRP2, NLRP3, NLRP6 and AIM2) which recruit and activate caspase-1 leading to processing and secretion of pro-inflammatory cytokines. Caspase-1-dependent inflammation leads to macrophage pyroptosis, a form of cell death. The function as activating adapter in different types of inflammasomes is mediated by the pyrin and CARD domains and their homotypic interactions. Clustered PYCARD nucleates the formation of caspase-1 filaments through the interaction of their respective CARD domains, acting as a platform for of caspase-1 polymerization. In the NLRC4 inflammasomes seems not be required but facilitates the processing of procaspase-1. In cooperation with NOD2 involved in an inflammasome activated by bacterial muramyl dipeptide leading to caspase-1 activation. May be involved in RIGI-triggered pro-inflammatory responses and inflammasome activation. In collaboration with AIM2 which detects cytosolic double-stranded DNA may also be involved in a caspase-1-independent cell death that involves caspase-8. In adaptive immunity may be involved in maturation of dendritic cells to stimulate T-cell immunity and in cytoskeletal rearrangements coupled to chemotaxis and antigen uptake may be involved in post-transcriptional regulation of the guanine nucleotide exchange factor DOCK2; the latter function is proposed to involve the nuclear form. Also involved in transcriptional activation of cytokines and chemokines independent of the inflammasome; this function may involve AP-1, NF-kappa-B, MAPK and caspase-8 signaling pathways. For regulation of NF-kappa-B activating and inhibiting functions have been reported. Modulates NF-kappa-B induction at the level of the IKK complex by inhibiting kinase activity of CHUK and IKBK. Proposed to compete with RIPK2 for association with CASP1 thereby down-regulating CASP1-mediated RIPK2-dependent NF-kappa-B activation and activating interleukin-1 beta processing. Modulates host resistance to DNA virus infection, probably by inducing the cleavage of and inactivating CGAS in presence of cytoplasmic double-stranded DNA. The sequence is that of Apoptosis-associated speck-like protein containing a CARD (PYCARD) from Bos taurus (Bovine).